The sequence spans 250 residues: Ribosomal RNA small subunit methyltransferase J (250 aa).

Residues 101-102, 117-118, 153-154, and Asp-171 contribute to the S-adenosyl-L-methionine site; these read RD, ER, and SS.

This sequence belongs to the methyltransferase superfamily. RsmJ family.

It is found in the cytoplasm. It carries out the reaction guanosine(1516) in 16S rRNA + S-adenosyl-L-methionine = N(2)-methylguanosine(1516) in 16S rRNA + S-adenosyl-L-homocysteine + H(+). Specifically methylates the guanosine in position 1516 of 16S rRNA. The sequence is that of Ribosomal RNA small subunit methyltransferase J from Shigella boydii serotype 18 (strain CDC 3083-94 / BS512).